Consider the following 963-residue polypeptide: Iron-responsive element-binding protein 2 (963 aa).

3 residues coordinate [4Fe-4S] cluster: Cys512, Cys578, and Cys581.

It belongs to the aconitase/IPM isomerase family. As to quaternary structure, interacts with RBCK1 isoform 1 and isoform 2 only in iron-rich conditions. Interacts (when associated with the 4Fe-4S) with FBXL5. Interacts with CIAO1 and CIAO2A. [4Fe-4S] cluster serves as cofactor. Post-translationally, ubiquitinated and degraded by the proteasome in presence of high level of iron and oxygen. Ubiquitinated by a SCF complex containing FBXL5. Upon iron and oxygen depletion FBXL5 is degraded, preventing ubiquitination and allowing its RNA-binding activity.

It is found in the cytoplasm. In terms of biological role, RNA-binding protein that binds to iron-responsive elements (IRES), which are stem-loop structures found in the 5'-UTR of ferritin, and delta aminolevulinic acid synthase mRNAs, and in the 3'-UTR of transferrin receptor mRNA. Binding to the IRE element in ferritin results in the repression of its mRNA translation. Binding of the protein to the transferrin receptor mRNA inhibits the degradation of this otherwise rapidly degraded mRNA. The protein is Iron-responsive element-binding protein 2 (IREB2) of Homo sapiens (Human).